Here is a 429-residue protein sequence, read N- to C-terminus: Fez family zinc finger protein 1 (429 aa).

An Engrailed homology 1 repressor motif is present at residues 29–44 (PLAFSIERIMARTPEP). 6 consecutive C2H2-type zinc fingers follow at residues 247–269 (FTCEVCGKVFNAHYNLTRHMPVH), 275–297 (FVCKVCGKGFRQASTLCRHKIIH), 303–325 (HKCNQCGKAFNRSSTLNTHTRIH), 331–353 (FICEFCGKGFHQKGNYKNHKLTH), 359–381 (FKCNICNKAFHQVYNLTFHMHTH), and 387–410 (FTCPTCGKGFCRNFDLKKHIRKLH). The disordered stretch occupies residues 409–429 (LHDISPGPHSPPTPTGNTEGQ).

Belongs to the krueppel C2H2-type zinc-finger protein family.

It is found in the nucleus. Functionally, transcription repressor. Involved in the development of the forebrain region. In Danio rerio (Zebrafish), this protein is Fez family zinc finger protein 1 (fezf1).